Here is a 526-residue protein sequence, read N- to C-terminus: Bifunctional purine biosynthesis protein PurH (526 aa).

Positions 1-147 constitute an MGS-like domain; it reads MSSIKRALIS…KNWKHVAIVT (147 aa).

It belongs to the PurH family.

The catalysed reaction is (6R)-10-formyltetrahydrofolate + 5-amino-1-(5-phospho-beta-D-ribosyl)imidazole-4-carboxamide = 5-formamido-1-(5-phospho-D-ribosyl)imidazole-4-carboxamide + (6S)-5,6,7,8-tetrahydrofolate. It catalyses the reaction IMP + H2O = 5-formamido-1-(5-phospho-D-ribosyl)imidazole-4-carboxamide. It functions in the pathway purine metabolism; IMP biosynthesis via de novo pathway; 5-formamido-1-(5-phospho-D-ribosyl)imidazole-4-carboxamide from 5-amino-1-(5-phospho-D-ribosyl)imidazole-4-carboxamide (10-formyl THF route): step 1/1. The protein operates within purine metabolism; IMP biosynthesis via de novo pathway; IMP from 5-formamido-1-(5-phospho-D-ribosyl)imidazole-4-carboxamide: step 1/1. The protein is Bifunctional purine biosynthesis protein PurH of Neisseria meningitidis serogroup B (strain ATCC BAA-335 / MC58).